The primary structure comprises 234 residues: Small ribosomal subunit protein uS3 (234 aa).

Residues 39 to 107 (IRKFLKKELY…EVSINIKEVK (69 aa)) enclose the KH type-2 domain.

Belongs to the universal ribosomal protein uS3 family. As to quaternary structure, part of the 30S ribosomal subunit. Forms a tight complex with proteins S10 and S14.

Functionally, binds the lower part of the 30S subunit head. Binds mRNA in the 70S ribosome, positioning it for translation. This Helicobacter pylori (strain P12) protein is Small ribosomal subunit protein uS3.